Consider the following 444-residue polypeptide: UDP-N-acetylmuramate--L-alanine ligase (444 aa).

110-116 (GAHGKTS) is an ATP binding site.

The protein belongs to the MurCDEF family. Phosphorylated by StkP in vitro. Dephosphorylated by PhpP in vitro.

The protein resides in the cytoplasm. The catalysed reaction is UDP-N-acetyl-alpha-D-muramate + L-alanine + ATP = UDP-N-acetyl-alpha-D-muramoyl-L-alanine + ADP + phosphate + H(+). It participates in cell wall biogenesis; peptidoglycan biosynthesis. Functionally, cell wall formation. The sequence is that of UDP-N-acetylmuramate--L-alanine ligase from Streptococcus pneumoniae serotype 4 (strain ATCC BAA-334 / TIGR4).